A 494-amino-acid polypeptide reads, in one-letter code: Keratin, type I cytoskeletal 12 (494 aa).

Over residues 1 to 12 the composition is skewed to polar residues; that stretch reads MDLSNNTMSLSV. Residues 1 to 32 form a disordered region; the sequence is MDLSNNTMSLSVRTPGLSRRLSSQSVIGRPRG. The segment at 1–124 is head; the sequence is MDLSNNTMSL…GNDGGLLSGS (124 aa). Positions 125–160 are coil 1A; the sequence is EKETMQNLNDRLASYLDKVRALEEANTELENKIREW. The IF rod domain maps to 125-440; the sequence is EKETMQNLND…RLLDGEAQGD (316 aa). The linker 1 stretch occupies residues 164–182; the sequence is RGTGTADASQSDYSKYYPL. The tract at residues 183–274 is coil 1B; that stretch reads IEDLRNKIIS…KNHEDELQSF (92 aa). A linker 12 region spans residues 275–297; it reads RVGGPGEVSVEMDAAPGVDLTRL. The segment at 298–435 is coil 2; that stretch reads LNDMRAQYET…IETYRRLLDG (138 aa). Positions 436–494 are tail; that stretch reads EAQGDGLEESLFVTDSKSQAQSTDSSKDPTKTRKIKTVVQEMVNGEVVSSQVQEIEELM. Positions 446 to 468 are disordered; it reads LFVTDSKSQAQSTDSSKDPTKTR. Residues 448 to 459 show a composition bias toward polar residues; it reads VTDSKSQAQSTD.

Belongs to the intermediate filament family. As to quaternary structure, heterotetramer of two type I and two type II keratins. Keratin-3 associates with keratin-12. In terms of tissue distribution, expressed in the corneal epithelium (at protein level).

Involved in corneal epithelium organization, integrity and corneal keratin expression. The polypeptide is Keratin, type I cytoskeletal 12 (KRT12) (Homo sapiens (Human)).